A 163-amino-acid chain; its full sequence is Cyclic pyranopterin monophosphate synthase (163 aa).

Residues Leu-79–His-81 and Met-118–Glu-119 contribute to the substrate site. Residue Asp-133 is part of the active site.

This sequence belongs to the MoaC family. In terms of assembly, homohexamer; trimer of dimers.

It carries out the reaction (8S)-3',8-cyclo-7,8-dihydroguanosine 5'-triphosphate = cyclic pyranopterin phosphate + diphosphate. It participates in cofactor biosynthesis; molybdopterin biosynthesis. In terms of biological role, catalyzes the conversion of (8S)-3',8-cyclo-7,8-dihydroguanosine 5'-triphosphate to cyclic pyranopterin monophosphate (cPMP). The chain is Cyclic pyranopterin monophosphate synthase from Nocardioides sp. (strain ATCC BAA-499 / JS614).